Here is a 229-residue protein sequence, read N- to C-terminus: Lipoprotein-releasing system ATP-binding protein LolD (229 aa).

The ABC transporter domain occupies 7 to 229 (LQCINLTKSF…KNGQLFNNKN (223 aa)). 43–50 (GKSGSGKS) contacts ATP.

This sequence belongs to the ABC transporter superfamily. Lipoprotein translocase (TC 3.A.1.125) family. In terms of assembly, the complex is composed of two ATP-binding proteins (LolD) and two transmembrane proteins (LolC and LolE).

The protein resides in the cell inner membrane. Part of the ABC transporter complex LolCDE involved in the translocation of mature outer membrane-directed lipoproteins, from the inner membrane to the periplasmic chaperone, LolA. Responsible for the formation of the LolA-lipoprotein complex in an ATP-dependent manner. The protein is Lipoprotein-releasing system ATP-binding protein LolD of Buchnera aphidicola subsp. Schizaphis graminum (strain Sg).